Reading from the N-terminus, the 107-residue chain is Thioredoxin (107 aa).

The Thioredoxin domain occupies 2–107; it reads DSIVHVTDDS…QLTAFLDSNX (106 aa). Cysteine 32 and cysteine 35 are oxidised to a cystine.

It belongs to the thioredoxin family.

Participates in various redox reactions through the reversible oxidation of its active center dithiol to a disulfide and catalyzes dithiol-disulfide exchange reactions. The protein is Thioredoxin (trxA) of Allochromatium vinosum (Chromatium vinosum).